A 667-amino-acid polypeptide reads, in one-letter code: DNA ligase (667 aa).

Residues 32–36, 81–82, and E110 contribute to the NAD(+) site; these read DSEYD and SL. Catalysis depends on K112, which acts as the N6-AMP-lysine intermediate. NAD(+)-binding residues include R133, E167, K283, and K307. The Zn(2+) site is built by C401, C404, C419, and C424. One can recognise a BRCT domain in the interval 586–667; that stretch reads EGHPDFKDKT…FVQKQNEIEG (82 aa).

The protein belongs to the NAD-dependent DNA ligase family. LigA subfamily. Mg(2+) serves as cofactor. It depends on Mn(2+) as a cofactor.

It catalyses the reaction NAD(+) + (deoxyribonucleotide)n-3'-hydroxyl + 5'-phospho-(deoxyribonucleotide)m = (deoxyribonucleotide)n+m + AMP + beta-nicotinamide D-nucleotide.. DNA ligase that catalyzes the formation of phosphodiester linkages between 5'-phosphoryl and 3'-hydroxyl groups in double-stranded DNA using NAD as a coenzyme and as the energy source for the reaction. It is essential for DNA replication and repair of damaged DNA. The polypeptide is DNA ligase (Staphylococcus saprophyticus subsp. saprophyticus (strain ATCC 15305 / DSM 20229 / NCIMB 8711 / NCTC 7292 / S-41)).